Here is a 397-residue protein sequence, read N- to C-terminus: Probable tRNA sulfurtransferase (397 aa).

Residues 60–165 (HPVIEKLQEV…KEGTYITAYD (106 aa)) enclose the THUMP domain. Residues 183 to 184 (ML), 208 to 209 (HF), Arg265, Gly287, and Gln296 contribute to the ATP site.

This sequence belongs to the ThiI family.

The protein localises to the cytoplasm. The enzyme catalyses [ThiI sulfur-carrier protein]-S-sulfanyl-L-cysteine + a uridine in tRNA + 2 reduced [2Fe-2S]-[ferredoxin] + ATP + H(+) = [ThiI sulfur-carrier protein]-L-cysteine + a 4-thiouridine in tRNA + 2 oxidized [2Fe-2S]-[ferredoxin] + AMP + diphosphate. The catalysed reaction is [ThiS sulfur-carrier protein]-C-terminal Gly-Gly-AMP + S-sulfanyl-L-cysteinyl-[cysteine desulfurase] + AH2 = [ThiS sulfur-carrier protein]-C-terminal-Gly-aminoethanethioate + L-cysteinyl-[cysteine desulfurase] + A + AMP + 2 H(+). It functions in the pathway cofactor biosynthesis; thiamine diphosphate biosynthesis. In terms of biological role, catalyzes the ATP-dependent transfer of a sulfur to tRNA to produce 4-thiouridine in position 8 of tRNAs, which functions as a near-UV photosensor. Also catalyzes the transfer of sulfur to the sulfur carrier protein ThiS, forming ThiS-thiocarboxylate. This is a step in the synthesis of thiazole, in the thiamine biosynthesis pathway. The sulfur is donated as persulfide by IscS. This is Probable tRNA sulfurtransferase from Anoxybacillus flavithermus (strain DSM 21510 / WK1).